A 234-amino-acid chain; its full sequence is Heme-copper oxidase subunit 2 (234 aa).

2 helical membrane passes run 13 to 33 (LFLL…AFFI) and 72 to 92 (LLFV…DETL). Cu cation-binding residues include His-151, Cys-188, Cys-192, and His-196.

The protein belongs to the cytochrome c oxidase subunit 2 family.

It localises to the cell membrane. In Aeropyrum pernix (strain ATCC 700893 / DSM 11879 / JCM 9820 / NBRC 100138 / K1), this protein is Heme-copper oxidase subunit 2 (aoxA).